Reading from the N-terminus, the 261-residue chain is uncharacterized protein (261 aa).

The HTH tetR-type domain maps to 15–75 (SINPEDIISG…AMTDRALSKY (61 aa)). Residues 38 to 57 (SMPLLGKHLGVGVTSIYWYF) constitute a DNA-binding region (H-T-H motif). Residues 234–261 (AAGEVAVRRPTATADAPTPGARAKAVAR) are disordered. Over residues 241–261 (RRPTATADAPTPGARAKAVAR) the composition is skewed to low complexity.

This is an uncharacterized protein from Mycobacterium bovis (strain ATCC BAA-935 / AF2122/97).